The sequence spans 380 residues: Cytochrome b (380 aa).

The next 4 helical transmembrane spans lie at 34 to 54 (FGSLLAVCLATQILTGLLLAM), 78 to 99 (WLIRNLHANGASFFFICIFLHI), 114 to 134 (WNTGVILLLTLMATAFVGYVL), and 179 to 199 (FFALHFLLPFVIAGITVTHLM). Residues His84 and His98 each coordinate heme b. Residues His183 and His197 each contribute to the heme b site. His202 serves as a coordination point for a ubiquinone. 4 consecutive transmembrane segments (helical) span residues 227-247 (LKDILGLALMLTPFLTLALFS), 289-309 (LGGVLALAASVLILLLIPFLH), 321-341 (LSQALFWLLVANLLILTWVGS), and 348-368 (FIIIGQMASFSYFTILLSLLP).

The protein belongs to the cytochrome b family. As to quaternary structure, the cytochrome bc1 complex contains 11 subunits: 3 respiratory subunits (MT-CYB, CYC1 and UQCRFS1), 2 core proteins (UQCRC1 and UQCRC2) and 6 low-molecular weight proteins (UQCRH/QCR6, UQCRB/QCR7, UQCRQ/QCR8, UQCR10/QCR9, UQCR11/QCR10 and a cleavage product of UQCRFS1). This cytochrome bc1 complex then forms a dimer. The cofactor is heme b.

Its subcellular location is the mitochondrion inner membrane. In terms of biological role, component of the ubiquinol-cytochrome c reductase complex (complex III or cytochrome b-c1 complex) that is part of the mitochondrial respiratory chain. The b-c1 complex mediates electron transfer from ubiquinol to cytochrome c. Contributes to the generation of a proton gradient across the mitochondrial membrane that is then used for ATP synthesis. The protein is Cytochrome b (MT-CYB) of Crossoptilon crossoptilon (White-eared pheasant).